Here is a 99-residue protein sequence, read N- to C-terminus: Large ribosomal subunit protein uL23 (99 aa).

The protein belongs to the universal ribosomal protein uL23 family. As to quaternary structure, part of the 50S ribosomal subunit. Contacts protein L29, and trigger factor when it is bound to the ribosome.

In terms of biological role, one of the early assembly proteins it binds 23S rRNA. One of the proteins that surrounds the polypeptide exit tunnel on the outside of the ribosome. Forms the main docking site for trigger factor binding to the ribosome. In Alkalilimnicola ehrlichii (strain ATCC BAA-1101 / DSM 17681 / MLHE-1), this protein is Large ribosomal subunit protein uL23.